The chain runs to 322 residues: tRNA dimethylallyltransferase (322 aa).

Position 12-19 (12-19) interacts with ATP; the sequence is GPTAAGKT. Residue 14-19 participates in substrate binding; it reads TAAGKT. Interaction with substrate tRNA regions lie at residues 37–40 and 160–164; these read DSAL and QRLIR.

This sequence belongs to the IPP transferase family. As to quaternary structure, monomer. Mg(2+) is required as a cofactor.

It catalyses the reaction adenosine(37) in tRNA + dimethylallyl diphosphate = N(6)-dimethylallyladenosine(37) in tRNA + diphosphate. In terms of biological role, catalyzes the transfer of a dimethylallyl group onto the adenine at position 37 in tRNAs that read codons beginning with uridine, leading to the formation of N6-(dimethylallyl)adenosine (i(6)A). The sequence is that of tRNA dimethylallyltransferase from Pseudomonas putida (Arthrobacter siderocapsulatus).